Consider the following 362-residue polypeptide: tRNA N6-adenosine threonylcarbamoyltransferase (362 aa).

Positions 120 and 124 each coordinate Fe cation. Substrate-binding positions include Leu-142–Gly-146, Asp-175, Gly-188, and Asn-288. Asp-316 serves as a coordination point for Fe cation. A compositionally biased stretch (basic and acidic residues) spans Arg-342 to Ala-351. Residues Arg-342–Ala-362 are disordered.

It belongs to the KAE1 / TsaD family. Fe(2+) is required as a cofactor.

The protein localises to the cytoplasm. The enzyme catalyses L-threonylcarbamoyladenylate + adenosine(37) in tRNA = N(6)-L-threonylcarbamoyladenosine(37) in tRNA + AMP + H(+). Functionally, required for the formation of a threonylcarbamoyl group on adenosine at position 37 (t(6)A37) in tRNAs that read codons beginning with adenine. Is involved in the transfer of the threonylcarbamoyl moiety of threonylcarbamoyl-AMP (TC-AMP) to the N6 group of A37, together with TsaE and TsaB. TsaD likely plays a direct catalytic role in this reaction. This is tRNA N6-adenosine threonylcarbamoyltransferase from Rhodospirillum rubrum (strain ATCC 11170 / ATH 1.1.1 / DSM 467 / LMG 4362 / NCIMB 8255 / S1).